We begin with the raw amino-acid sequence, 144 residues long: Maximins 6/Hv (144 aa).

The N-terminal stretch at 1-18 (MNFKYIVAVSFLIASGYA) is a signal peptide. The propeptide occupies 19–43 (RSEENDVQSLSQREVLEEETLREIR). The residue at position 70 (N70) is an Asparagine amide. Positions 74–123 (TAKGHEVMKRLEAVMRDLDSLDHPEEASERETRGFNQEEIANLFTKKEKR) are excised as a propeptide. I143 carries the isoleucine amide modification.

The protein belongs to the bombinin family. As to expression, expressed by the skin glands.

It is found in the secreted. In terms of biological role, shows antimicrobial activity against bacteria and against the fungus C.albicans. It has little hemolytic activity. Shows antimicrobial activity against bacteria and against the fungus C.albicans. Shows strong hemolytic activity. The polypeptide is Maximins 6/Hv (Bombina maxima (Giant fire-bellied toad)).